A 275-amino-acid chain; its full sequence is COP9 signalosome complex subunit 7a (275 aa).

N-acetylserine is present on Ser2. The region spanning 2–159 (SAEVKVTGQN…QRLEVDYSIG (158 aa)) is the PCI domain. Positions 185–233 (LSGIEEQVSRANQHKEQQLGLKQQIESEVANLKKTIKVTTAAAAAATSQ) form a coiled coil. A disordered region spans residues 227 to 275 (AAAATSQDPEQHLTELREPAPGTNQRQPSKKASKGKGLRGSAKIWSKSN). The segment covering 235 to 244 (PEQHLTELRE) has biased composition (basic and acidic residues). The span at 254 to 263 (PSKKASKGKG) shows a compositional bias: basic residues.

This sequence belongs to the CSN7/EIF3M family. CSN7 subfamily. As to quaternary structure, component of the CSN complex, composed of COPS1/GPS1, COPS2, COPS3, COPS4, COPS5, COPS6, COPS7 (COPS7A or COPS7B), COPS8 and COPS9. In the complex, it probably interacts directly with COPS1, COPS2, COPS4, COPS5, COPS6 and COPS8. Interacts with PMF1. Interacts with the translation initiation factor EIF3S6. Interacts with CK2 and PKD. Interacts directly with ID3. In terms of processing, phosphorylated by CK2 and PKD kinases.

The protein localises to the cytoplasm. It localises to the nucleus. Functionally, component of the COP9 signalosome complex (CSN), a complex involved in various cellular and developmental processes. The CSN complex is an essential regulator of the ubiquitin (Ubl) conjugation pathway by mediating the deneddylation of the cullin subunits of SCF-type E3 ligase complexes, leading to decrease the Ubl ligase activity of SCF-type complexes such as SCF, CSA or DDB2. The complex is also involved in phosphorylation of p53/TP53, JUN, I-kappa-B-alpha/NFKBIA, ITPK1 and IRF8/ICSBP, possibly via its association with CK2 and PKD kinases. CSN-dependent phosphorylation of TP53 and JUN promotes and protects degradation by the Ubl system, respectively. This is COP9 signalosome complex subunit 7a (COPS7A) from Pongo abelii (Sumatran orangutan).